The following is a 256-amino-acid chain: Transcription factor CAULIFLOWER (256 aa).

An MADS-box domain is found at 1 to 61; that stretch reads MGRGRVQLKR…GKLFEYTSES (61 aa). The K-box domain maps to 90–180; the sequence is QPNWSMEYSR…TKQIKERENI (91 aa).

In terms of assembly, homodimer capable of binding to CArG-box sequences.

The protein localises to the nucleus. In terms of biological role, probable transcription factor that promotes early floral meristem identity in synergy with APETALA1, FRUITFULL and LEAFY. Is required subsequently for the transition of an inflorescence meristem into a floral meristem. Seems to be partially redundant to the function of APETALA1. This chain is Transcription factor CAULIFLOWER (CAL), found in Arabidopsis lyrata subsp. lyrata (Lyre-leaved rock-cress).